The primary structure comprises 493 residues: 3-octaprenyl-4-hydroxybenzoate carboxy-lyase (493 aa).

Residue Asn172 participates in Mn(2+) binding. Prenylated FMN-binding positions include 175–177 (IYR), 189–191 (RWL), and 194–195 (RG). Position 238 (Glu238) interacts with Mn(2+). Asp287 acts as the Proton donor in catalysis.

Belongs to the UbiD family. As to quaternary structure, homohexamer. Prenylated FMN is required as a cofactor. Mn(2+) serves as cofactor.

It localises to the cell membrane. The catalysed reaction is a 4-hydroxy-3-(all-trans-polyprenyl)benzoate + H(+) = a 2-(all-trans-polyprenyl)phenol + CO2. It functions in the pathway cofactor biosynthesis; ubiquinone biosynthesis. In terms of biological role, catalyzes the decarboxylation of 3-octaprenyl-4-hydroxy benzoate to 2-octaprenylphenol, an intermediate step in ubiquinone biosynthesis. The chain is 3-octaprenyl-4-hydroxybenzoate carboxy-lyase from Shewanella putrefaciens (strain CN-32 / ATCC BAA-453).